The following is a 1377-amino-acid chain: MLNSQSGNRLRIDFSNVPQQIDIPNLLQLQKKSFDYFLNIDAKNSESGIEKVFKSIFPIHDPQNRLSLEYVSSEVGKPKYTIRECMERGLTYSVNLKMKIRLTLHEKDEKTGEKIGIKDIKEQEIYIREIPLMTDRISFIINGVERVVVNQLHRSPGVIFKEEESSTVANKLVYTAQIIPDRGSWLYFEYDAKDVLYVRINKRRKVPITILFRALGYKKQDIIKLFYPIQTIHVKKDKFLTEFNPNDFLDRVEYDLKDEKGNIIHQAGKRMTKKKAEQLVKDGIKWVEYPVEILTNRYLANPIINKETGEVLFDSLTLLDESKLAKIKEQKTFDIANDLANGVDAAIINSFIQDNETLKLLKQTENIDDENDLAAIRIYKVMRPGEPVVKDAAKAFVNDLFFNPERYDLTKVGRMKMNHKLGLDTPEYVTVLTNEDIVKTAKYLIKVKNGRGHIDDRDHLGNRRIRSIGELLANELHVGLAKMQKAIRDKFTALNTDIDKVMPYDLINPKTITVTIMEFFTGGQLSQFMDQTNPLSEVTHKRRLSALGEGGLVKERAGFEVRDVHATHYGRICPVETPEGQNIGLINTLSTYAKVNDLGFVEAPYKKVENGKVSNEIVYLTATQEEGLVIAAASTKIDEKGSIVEEFVEARQDGETILARREEVHLIDLCSGMIVGVAASLIPFLEHDDANRALMGSNMQRQAVPLLTAQAPIVGTGMEKIIARDAWEAIKAKRAGIVEKVDNKNIFILGEDENGPFIDHYKMEKNLRTNQNTTFTQHPIVKKGEFVQVGQIIADGPSMDQGELAIGKNALIAFMPWHGYNYEDAIVISEKILREDTFTSVHIYEKEVEARELKDGVEEITKDIPNVKEDDLAHLDESGIAKIGTHIKPGMILVGKVSPKGEVKPTPEERLLRAIFGEKAGHVVNKSLYATASMEGVVVDVKIFTKKGYEKDARAIKAYDEEKLNLEKEHHDRLLMMDREETLRVCSLLSKSALNSDEEINGQKYKKGAKVDIKELEKINRFALNSLVKAYSKDVQKEYEDLKNHFQNEKKKLKSEHDEKLEILEKDDILPSGVVKLVKVYIATKRKLKVGDKMAGRHGNKGIVSNIVPEVDMPYLPDGRPIDIALNPLGVPSRMNIGQILESHLGIVGMRLGDQIQEIFDKKQKDFIKQLRTKILEICSVSRLTLEKKFVESLNDEQLISYARDWARGVKFATPVFEGVTVEEFSKLFEMAKIAMDGKSELYDGRTGEKMAERVHVGCMYMLKLHHLVDEKVHARSTGPYSLVTQQPVGGKALFGGQRFGEMEVWALEAYGAAHTLREMLTIKSDDVEGRFSAYKALTKGENVPATGIPETFFVLTNELKSLALDVEIFDKDENNE.

This sequence belongs to the RNA polymerase beta chain family. The RNAP catalytic core consists of 2 alpha, 1 beta, 1 beta' and 1 omega subunit. When a sigma factor is associated with the core the holoenzyme is formed, which can initiate transcription.

The catalysed reaction is RNA(n) + a ribonucleoside 5'-triphosphate = RNA(n+1) + diphosphate. Its function is as follows. DNA-dependent RNA polymerase catalyzes the transcription of DNA into RNA using the four ribonucleoside triphosphates as substrates. The chain is DNA-directed RNA polymerase subunit beta from Campylobacter lari (strain RM2100 / D67 / ATCC BAA-1060).